A 293-amino-acid chain; its full sequence is Nucleotide-binding protein BC_5156 (293 aa).

Position 14–21 (14–21) interacts with ATP; that stretch reads GMSGAGKT. GTP is bound at residue 65-68; sequence DLRG.

It belongs to the RapZ-like family.

Displays ATPase and GTPase activities. The sequence is that of Nucleotide-binding protein BC_5156 from Bacillus cereus (strain ATCC 14579 / DSM 31 / CCUG 7414 / JCM 2152 / NBRC 15305 / NCIMB 9373 / NCTC 2599 / NRRL B-3711).